A 311-amino-acid polypeptide reads, in one-letter code: tRNA dimethylallyltransferase (311 aa).

Residue 10 to 17 (GPTASGKT) coordinates ATP. A substrate-binding site is contributed by 12-17 (TASGKT). Interaction with substrate tRNA stretches follow at residues 35–38 (DSAL), 159–163 (QRINR), and 240–245 (RCVGYR).

It belongs to the IPP transferase family. As to quaternary structure, monomer. Mg(2+) is required as a cofactor.

The catalysed reaction is adenosine(37) in tRNA + dimethylallyl diphosphate = N(6)-dimethylallyladenosine(37) in tRNA + diphosphate. Functionally, catalyzes the transfer of a dimethylallyl group onto the adenine at position 37 in tRNAs that read codons beginning with uridine, leading to the formation of N6-(dimethylallyl)adenosine (i(6)A). In Haemophilus influenzae (strain 86-028NP), this protein is tRNA dimethylallyltransferase.